Reading from the N-terminus, the 138-residue chain is Flagellar basal body rod protein FlgB (138 aa).

This sequence belongs to the flagella basal body rod proteins family. As to quaternary structure, the basal body constitutes a major portion of the flagellar organelle and consists of a number of rings mounted on a central rod. In Gram-negative bacteria, at least four rings, L, P, S and M are present, whereas Gram-positive bacteria lack the L and P rings. The rod consists of about 26 subunits of FlgG in the distal portion, and FlgB, FlgC and FlgF build up the proximal portion of the rod with about 6 subunits each. Rod assembly occurs by export via the flagellum-specific pathway of its constituent proteins and by their incorporation into the rod structure in the probable order of FlgB, FlgC, FlgF and FlgG. Another protein, FliE, also assembles onto the stable rod structure.

The protein resides in the bacterial flagellum basal body. Functionally, structural component of flagellum, the bacterial motility apparatus. Part of the rod structure of flagellar basal body. In Escherichia coli (strain K12), this protein is Flagellar basal body rod protein FlgB (flgB).